A 312-amino-acid polypeptide reads, in one-letter code: DNA-directed RNA polymerase subunit alpha (312 aa).

Residues 1–229 form an alpha N-terminal domain (alpha-NTD) region; that stretch reads MLQYQIDRVD…ALFQPLATVT (229 aa). The alpha C-terminal domain (alpha-CTD) stretch occupies residues 241–312; the sequence is SAESQIPLEE…ISLPQSRTTA (72 aa).

Belongs to the RNA polymerase alpha chain family. In cyanobacteria the RNAP catalytic core is composed of 2 alpha, 1 beta, 1 beta', 1 gamma and 1 omega subunit. When a sigma factor is associated with the core the holoenzyme is formed, which can initiate transcription.

It carries out the reaction RNA(n) + a ribonucleoside 5'-triphosphate = RNA(n+1) + diphosphate. Its function is as follows. DNA-dependent RNA polymerase catalyzes the transcription of DNA into RNA using the four ribonucleoside triphosphates as substrates. The protein is DNA-directed RNA polymerase subunit alpha of Synechococcus sp. (strain RCC307).